The primary structure comprises 283 residues: BTB/POZ domain-containing protein KCTD15 (283 aa).

The interval 1 to 33 is disordered; it reads MPHRKERPSGSSLNAHGSSGTAEGGNMSRLSLT. Residues 9-21 are compositionally biased toward polar residues; that stretch reads SGSSLNAHGSSGT. S31, S35, and S38 each carry phosphoserine. The BTB domain maps to 56 to 126; sequence APVHIDVGGH…LRTSKLLLPD (71 aa).

As to quaternary structure, forms oligomers, predominantly homopentamers. Interacts with KCTD1, probably forming heteropentamers depending on its abundance in a cell-type dependent manner. Interacts with TFAP2A; this interaction inhibits TFAP2A transcriptional activation. As to expression, expressed in the cerebral cortex, cerebellum, and hypothalamus (at protein level). Expressed in the arcuate hypothalamic nucleus, the ventromedial hypothalamic nucleus and the accumbens nucleus of the ventral striatum.

It localises to the nucleus. Functionally, during embryonic development, interferes with neural crest formation. Inhibits AP2 transcriptional activity by interaction with its activation domain. This Mus musculus (Mouse) protein is BTB/POZ domain-containing protein KCTD15 (Kctd15).